A 113-amino-acid chain; its full sequence is Urotensin-2B (113 aa).

Positions 1-27 are cleaved as a signal peptide; the sequence is MKVFSTSLWCGLLTLLSVMNLFKSVRG. Positions 28-103 are excised as a propeptide; sequence RPHLSSGHEL…LDNLSSSHTK (76 aa). The cysteines at positions 107 and 112 are disulfide-linked.

This sequence belongs to the urotensin-2 family.

The protein localises to the secreted. Functionally, potent vasoconstrictor. The protein is Urotensin-2B (Uts2b) of Mus musculus (Mouse).